The primary structure comprises 363 residues: Chorismate synthase (363 aa).

Arginine 48 is an NADP(+) binding site. Residues 125–127, 238–239, glycine 278, 293–297, and arginine 319 contribute to the FMN site; these read RSS, NA, and KPTAS.

The protein belongs to the chorismate synthase family. As to quaternary structure, homotetramer. FMNH2 serves as cofactor.

The catalysed reaction is 5-O-(1-carboxyvinyl)-3-phosphoshikimate = chorismate + phosphate. It functions in the pathway metabolic intermediate biosynthesis; chorismate biosynthesis; chorismate from D-erythrose 4-phosphate and phosphoenolpyruvate: step 7/7. Functionally, catalyzes the anti-1,4-elimination of the C-3 phosphate and the C-6 proR hydrogen from 5-enolpyruvylshikimate-3-phosphate (EPSP) to yield chorismate, which is the branch point compound that serves as the starting substrate for the three terminal pathways of aromatic amino acid biosynthesis. This reaction introduces a second double bond into the aromatic ring system. The protein is Chorismate synthase of Acinetobacter baumannii (strain AB0057).